The chain runs to 304 residues: Acetylglutamate kinase (304 aa).

Residues 69 to 70 (GG), R91, and N202 contribute to the substrate site.

This sequence belongs to the acetylglutamate kinase family. ArgB subfamily.

Its subcellular location is the cytoplasm. The enzyme catalyses N-acetyl-L-glutamate + ATP = N-acetyl-L-glutamyl 5-phosphate + ADP. Its pathway is amino-acid biosynthesis; L-arginine biosynthesis; N(2)-acetyl-L-ornithine from L-glutamate: step 2/4. Catalyzes the ATP-dependent phosphorylation of N-acetyl-L-glutamate. The polypeptide is Acetylglutamate kinase (Caulobacter vibrioides (strain ATCC 19089 / CIP 103742 / CB 15) (Caulobacter crescentus)).